The sequence spans 208 residues: Rac-like GTP-binding protein ARAC8 (208 aa).

15-22 (GDGAVGKT) contacts GTP. Residues 37-45 (YIPTVFDNF) carry the Effector region motif. GTP-binding positions include 62–66 (DTAGQ) and 120–123 (TKMD). S-palmitoyl cysteine attachment occurs at residues Cys-199 and Cys-205.

It belongs to the small GTPase superfamily. Rho family. In terms of assembly, interacts with ICR1. Binds to SPK1. Post-translationally, although this sequence has a C-terminal -CXXX, it is palmitoylated at Cys-205, rather than prenylated.

The protein resides in the membrane. Its function is as follows. Acts as a negative regulator of abscisic acid (ABA) responses. This Arabidopsis thaliana (Mouse-ear cress) protein is Rac-like GTP-binding protein ARAC8 (ARAC8).